Reading from the N-terminus, the 424-residue chain is Serine hydroxymethyltransferase 1 (424 aa).

(6S)-5,6,7,8-tetrahydrofolate is bound by residues L125 and 129 to 131 (GHL). K234 is subject to N6-(pyridoxal phosphate)lysine.

It belongs to the SHMT family. In terms of assembly, homodimer. It depends on pyridoxal 5'-phosphate as a cofactor.

The protein resides in the cytoplasm. It carries out the reaction (6R)-5,10-methylene-5,6,7,8-tetrahydrofolate + glycine + H2O = (6S)-5,6,7,8-tetrahydrofolate + L-serine. It functions in the pathway one-carbon metabolism; tetrahydrofolate interconversion. It participates in amino-acid biosynthesis; glycine biosynthesis; glycine from L-serine: step 1/1. Functionally, catalyzes the reversible interconversion of serine and glycine with tetrahydrofolate (THF) serving as the one-carbon carrier. This reaction serves as the major source of one-carbon groups required for the biosynthesis of purines, thymidylate, methionine, and other important biomolecules. Also exhibits THF-independent aldolase activity toward beta-hydroxyamino acids, producing glycine and aldehydes, via a retro-aldol mechanism. This is Serine hydroxymethyltransferase 1 from Burkholderia lata (strain ATCC 17760 / DSM 23089 / LMG 22485 / NCIMB 9086 / R18194 / 383).